Here is a 94-residue protein sequence, read N- to C-terminus: DNA-binding protein HU (94 aa).

This sequence belongs to the bacterial histone-like protein family. Homodimer.

Histone-like DNA-binding protein which is capable of wrapping DNA to stabilize it, and thus to prevent its denaturation under extreme environmental conditions. It is essential for heterocyst differentiation. In Nostoc sp. (strain PCC 7120 / SAG 25.82 / UTEX 2576), this protein is DNA-binding protein HU (hup).